The sequence spans 344 residues: Aurora kinase B (344 aa).

Threonine 35 bears the Phosphothreonine mark. A Phosphoserine modification is found at serine 62. Threonine 64 is modified (phosphothreonine). The Protein kinase domain occupies 77 to 327; it reads FEIGRPLGKG…LAQVSAHPWV (251 aa). ATP-binding positions include 83 to 91 and lysine 106; that span reads LGKGKFGNV. Aspartate 200 (proton acceptor) is an active-site residue. The residue at position 215 (lysine 215) is an N6-acetyllysine. Serine 227 bears the Phosphoserine mark. The residue at position 232 (threonine 232) is a Phosphothreonine; by autocatalysis.

Belongs to the protein kinase superfamily. Ser/Thr protein kinase family. Aurora subfamily. In terms of assembly, component of the chromosomal passenger complex (CPC) composed of at least BIRC5/survivin, CDCA8/borealin, INCENP, AURKB or AURKC; predominantly independent AURKB- and AURKC-containing complexes exist. Associates with RACGAP1 during M phase. Interacts with SPDYC; this interaction may be required for proper localization of active, Thr-232-phosphorylated AURKB form during prometaphase and metaphase. Interacts with p53/TP53. Interacts (via the middle kinase domain) with NOC2L (via the N- and C-terminus domains). Interacts with CDCA1. Interacts with EVI5. Interacts with JTB. Interacts with NDC80. Interacts with PSMA3. Interacts with RNF2/RING1B. Interacts with SEPTIN1. Interacts with SIRT2. Interacts with TACC1. Interacts with TTC28. In terms of processing, the phosphorylation of Thr-232 requires the binding to INCENP and occurs by means of an autophosphorylation mechanism. Thr-232 phosphorylation is indispensable for the AURKB kinase activity. Post-translationally, acetylated at Lys-215 by KAT5 at kinetochores, increasing AURKB activity and promoting accurate chromosome segregation in mitosis. Ubiquitinated by different BCR (BTB-CUL3-RBX1) E3 ubiquitin ligase complexes. Ubiquitinated by the BCR(KLHL9-KLHL13) E3 ubiquitin ligase complex, ubiquitination leads to removal from mitotic chromosomes and is required for cytokinesis. During anaphase, the BCR(KLHL21) E3 ubiquitin ligase complex recruits the CPC complex from chromosomes to the spindle midzone and mediates the ubiquitination of AURKB. Ubiquitination of AURKB by BCR(KLHL21) E3 ubiquitin ligase complex may not lead to its degradation by the proteasome. Deubiquitinated by USP35; inhibiting CDH1-mediated degradation of AURKB.

Its subcellular location is the nucleus. The protein resides in the chromosome. It localises to the centromere. It is found in the kinetochore. The protein localises to the cytoplasm. Its subcellular location is the cytoskeleton. The protein resides in the spindle. It localises to the midbody. The catalysed reaction is L-seryl-[protein] + ATP = O-phospho-L-seryl-[protein] + ADP + H(+). The enzyme catalyses L-threonyl-[protein] + ATP = O-phospho-L-threonyl-[protein] + ADP + H(+). Activity is greatly increased when AURKB is within the CPC complex. In particular, AURKB-phosphorylated INCENP acts as an activator of AURKB. Positive feedback between HASPIN and AURKB contributes to CPC localization. In terms of biological role, serine/threonine-protein kinase component of the chromosomal passenger complex (CPC), a complex that acts as a key regulator of mitosis. The CPC complex has essential functions at the centromere in ensuring correct chromosome alignment and segregation and is required for chromatin-induced microtubule stabilization and spindle assembly. Involved in the bipolar attachment of spindle microtubules to kinetochores and is a key regulator for the onset of cytokinesis during mitosis. Required for central/midzone spindle assembly and cleavage furrow formation. Key component of the cytokinesis checkpoint, a process required to delay abscission to prevent both premature resolution of intercellular chromosome bridges and accumulation of DNA damage: phosphorylates CHMP4C, leading to retain abscission-competent VPS4 (VPS4A and/or VPS4B) at the midbody ring until abscission checkpoint signaling is terminated at late cytokinesis. AURKB phosphorylates the CPC complex subunits BIRC5/survivin, CDCA8/borealin and INCENP. Phosphorylation of INCENP leads to increased AURKB activity. Other known AURKB substrates involved in centromeric functions and mitosis are CENPA, DES/desmin, GPAF, KIF2C, NSUN2, RACGAP1, SEPTIN1, VIM/vimentin, HASPIN, and histone H3. A positive feedback loop involving HASPIN and AURKB contributes to localization of CPC to centromeres. Phosphorylation of VIM controls vimentin filament segregation in cytokinetic process, whereas histone H3 is phosphorylated at 'Ser-10' and 'Ser-28' during mitosis (H3S10ph and H3S28ph, respectively). AURKB is also required for kinetochore localization of BUB1 and SGO1. Phosphorylation of p53/TP53 negatively regulates its transcriptional activity. Key regulator of active promoters in resting B- and T-lymphocytes: acts by mediating phosphorylation of H3S28ph at active promoters in resting B-cells, inhibiting RNF2/RING1B-mediated ubiquitination of histone H2A and enhancing binding and activity of the USP16 deubiquitinase at transcribed genes. Acts as an inhibitor of CGAS during mitosis: catalyzes phosphorylation of the N-terminus of CGAS during the G2-M transition, blocking CGAS liquid phase separation and activation, and thereby preventing CGAS-induced autoimmunity. Phosphorylates KRT5 during anaphase and telophase. Phosphorylates ATXN10 which promotes phosphorylation of ATXN10 by PLK1 and may play a role in the regulation of cytokinesis and stimulating the proteasomal degradation of ATXN10. This is Aurora kinase B (AURKB) from Sus scrofa (Pig).